Consider the following 253-residue polypeptide: Putative enoyl-CoA hydratase (253 aa).

Residue Glu131 is part of the active site.

The protein belongs to the enoyl-CoA hydratase/isomerase family. In terms of assembly, homohexamer; dimer of trimers.

It catalyses the reaction a (3S)-3-hydroxyacyl-CoA = a (2E)-enoyl-CoA + H2O. In Thermus thermophilus (strain ATCC 27634 / DSM 579 / HB8), this protein is Putative enoyl-CoA hydratase.